A 318-amino-acid chain; its full sequence is Methionyl-tRNA formyltransferase (318 aa).

Residue 112–115 (SILP) participates in (6S)-5,6,7,8-tetrahydrofolate binding.

It belongs to the Fmt family.

The enzyme catalyses L-methionyl-tRNA(fMet) + (6R)-10-formyltetrahydrofolate = N-formyl-L-methionyl-tRNA(fMet) + (6S)-5,6,7,8-tetrahydrofolate + H(+). Its function is as follows. Attaches a formyl group to the free amino group of methionyl-tRNA(fMet). The formyl group appears to play a dual role in the initiator identity of N-formylmethionyl-tRNA by promoting its recognition by IF2 and preventing the misappropriation of this tRNA by the elongation apparatus. The sequence is that of Methionyl-tRNA formyltransferase from Shewanella baltica (strain OS195).